The following is a 300-amino-acid chain: Ribonuclease HIII (300 aa).

In terms of domain architecture, RNase H type-2 spans 83–300 (IPIIGSDEVG…THKAQALLTK (218 aa)). Asp-89, Glu-90, and Asp-194 together coordinate a divalent metal cation.

This sequence belongs to the RNase HII family. RnhC subfamily. Requires Mn(2+) as cofactor. It depends on Mg(2+) as a cofactor.

The protein localises to the cytoplasm. The catalysed reaction is Endonucleolytic cleavage to 5'-phosphomonoester.. In terms of biological role, endonuclease that specifically degrades the RNA of RNA-DNA hybrids. The protein is Ribonuclease HIII of Streptococcus pyogenes serotype M12 (strain MGAS2096).